Reading from the N-terminus, the 83-residue chain is Antitoxin ParD1 (83 aa).

Residues 33-60 (IRSALRLLEDRETQLRALREALEAGERS) adopt a coiled-coil conformation. Positions 54–83 (LEAGERSGSSTPFDFDGFLGRKRADASRGR) are disordered.

This sequence belongs to the ParD antitoxin family.

Functionally, antitoxin component of a type II toxin-antitoxin (TA) system. This chain is Antitoxin ParD1 (parD1), found in Mycobacterium tuberculosis (strain CDC 1551 / Oshkosh).